Consider the following 510-residue polypeptide: Cytochrome P450 93A3 (510 aa).

A helical transmembrane segment spans residues 64 to 84 (PIIHLFLGSVPCVVASTAEAA). Position 448 (C448) interacts with heme.

This sequence belongs to the cytochrome P450 family. It depends on heme as a cofactor.

Its subcellular location is the membrane. In Glycine max (Soybean), this protein is Cytochrome P450 93A3 (CYP93A3).